The sequence spans 134 residues: Replication enhancer protein (134 aa).

This sequence belongs to the geminiviridae replication enhancer protein family. As to quaternary structure, homooligomer. Interacts with the replication-associated protein (REP). Interacts with host proliferating cell nuclear antigen (PCNA). Interacts with host retinoblastoma-related protein 1 (RBR1), and may thereby deregulate the host cell cycle. Oligomerization and interaction with PCNA are necessary for optimal replication enhancement.

In terms of biological role, increases viral DNA accumulation. Enhances infectivity and symptom expression. The protein is Replication enhancer protein of African cassava mosaic virus (isolate West Kenyan 844) (ACMV).